We begin with the raw amino-acid sequence, 164 residues long: Phosphopantetheine adenylyltransferase (164 aa).

Ser9 is a binding site for substrate. ATP is bound by residues 9 to 10 (SF) and His17. Residues Lys41, Val78, and Arg92 each coordinate substrate. Residues 93–95 (GLR), Glu103, and 128–134 (VRTITAT) contribute to the ATP site.

This sequence belongs to the bacterial CoaD family. Homohexamer. Mg(2+) is required as a cofactor.

Its subcellular location is the cytoplasm. It carries out the reaction (R)-4'-phosphopantetheine + ATP + H(+) = 3'-dephospho-CoA + diphosphate. It participates in cofactor biosynthesis; coenzyme A biosynthesis; CoA from (R)-pantothenate: step 4/5. In terms of biological role, reversibly transfers an adenylyl group from ATP to 4'-phosphopantetheine, yielding dephospho-CoA (dPCoA) and pyrophosphate. This Brucella abortus (strain 2308) protein is Phosphopantetheine adenylyltransferase.